A 415-amino-acid polypeptide reads, in one-letter code: Maltose excess protein 1, chloroplastic (415 aa).

The interval Ser74 to Leu93 is disordered. Transmembrane regions (helical) follow at residues Ala139 to Leu159, Leu176 to Ile196, Phe199 to Gly219, Asp231 to Pro251, Leu252 to Ile272, Phe286 to Gln306, Ser322 to Ile342, Leu345 to Cys365, and Ser373 to Trp393.

Expressed in leaves and roots. Expressed in root cap cells.

Its subcellular location is the plastid. It localises to the chloroplast inner membrane. Probable maltose transporter. Essential for the conversion of starch to sucrose in leaves at night, probably via the export of maltose from the chloroplast. Required for root cap cells formation. The chain is Maltose excess protein 1, chloroplastic (MEX1) from Arabidopsis thaliana (Mouse-ear cress).